Consider the following 199-residue polypeptide: MKTLFFATSNINKINEVKQILDIPKIKIEIPQNFDIKETGKTFKENSLLKAKALFKILNNKQPVFSEDSGLCIEALNMEPGIYSKRYDQYKLGKKLDNNEKNHLIIDLMREQNNRTAYFICVISYIDVDGTINNFEGMLKGTIALNIDYYQKNGFGYNPIFLTTNNKRLSELNLEEKNKISHRGIAFDKFKKFLMQFLD.

8 to 13 (TSNINK) lines the substrate pocket. The active-site Proton acceptor is aspartate 68. Residue aspartate 68 coordinates Mg(2+). Substrate contacts are provided by residues serine 69, 155 to 158 (FGYN), lysine 177, and 182 to 183 (HR).

It belongs to the HAM1 NTPase family. In terms of assembly, homodimer. It depends on Mg(2+) as a cofactor.

The catalysed reaction is XTP + H2O = XMP + diphosphate + H(+). The enzyme catalyses dITP + H2O = dIMP + diphosphate + H(+). It carries out the reaction ITP + H2O = IMP + diphosphate + H(+). Its function is as follows. Pyrophosphatase that catalyzes the hydrolysis of nucleoside triphosphates to their monophosphate derivatives, with a high preference for the non-canonical purine nucleotides XTP (xanthosine triphosphate), dITP (deoxyinosine triphosphate) and ITP. Seems to function as a house-cleaning enzyme that removes non-canonical purine nucleotides from the nucleotide pool, thus preventing their incorporation into DNA/RNA and avoiding chromosomal lesions. The polypeptide is dITP/XTP pyrophosphatase (Borrelia recurrentis (strain A1)).